The sequence spans 539 residues: MKALTATLLVGTALAAVPPQQPIQVPTEDSAWAKPLENLKDTFKTLGNDAKQAWNELASAFPDAINEYTLFSAPKKHTRRPDTHWDHIVRGSDVQSIWVEGADGQKRREVDGKLEKYDLRVKAVDPSKLGIDKVKQYSGYLDDKENDKHLFYWFFESRNDPKNDPVVLWLNGGPGCSSLTGLFLELGPASIDKNLKVVHNPYSWNSNASVIFLDQPVNVGFSYSGGSVSDTIAAGKDVYALLTLFFKQFPQYATQDFHIAGESYAGHYIPVFASEILSHKNRNINLQSVLIGNGLTDPLTQYPHYRPMACGEGGYPAVLDESTCRSMDNSLPRCLSMIESCYSSESAWLCVPASIYCNNAMIGPYQRTGQNPYDVRAKCEDGGSLCYSQLGYITEWLNQKSVMDALGVEVSSYDSCNMDINRNFLFHGDWMKPFHRVVPGLIDQIRVLIYAGDADFICNWLGNQAWTDALEWSGREKFAKAELKDLTIVDNENKGKNIGKVKSYGNFTFMRLFGGGHMVPLDQPEASLEFFNRWLGGEW.

The signal sequence occupies residues 1–17; that stretch reads MKALTATLLVGTALAAV. A propeptide spanning residues 18 to 122 is cleaved from the precursor; sequence PPQQPIQVPT…KLEKYDLRVK (105 aa). Intrachain disulfides connect Cys176/Cys416, Cys310/Cys324, Cys334/Cys357, Cys341/Cys350, and Cys379/Cys386. N-linked (GlcNAc...) asparagine glycosylation is present at Asn207. Ser263 is a catalytic residue. Asp455 is a catalytic residue. A glycan (N-linked (GlcNAc...) asparagine) is linked at Asn506. Residue His517 is part of the active site.

Belongs to the peptidase S10 family.

The protein localises to the vacuole. It catalyses the reaction Release of a C-terminal amino acid with broad specificity.. Vacuolar carboxypeptidase involved in degradation of small peptides. Digests preferentially peptides containing an aliphatic or hydrophobic residue in P1' position, as well as methionine, leucine or phenylalanine in P1 position of ester substrate. This Coccidioides posadasii (strain C735) (Valley fever fungus) protein is Carboxypeptidase Y homolog A (cpyA).